The sequence spans 261 residues: UPF0328 protein ECU03_1620 (261 aa).

This sequence belongs to the UPF0328 family.

This chain is UPF0328 protein ECU03_1620, found in Encephalitozoon cuniculi (strain GB-M1) (Microsporidian parasite).